A 77-amino-acid polypeptide reads, in one-letter code: Defensin-like protein 4 (77 aa).

An N-terminal signal peptide occupies residues Met-1 to Ala-30. Cystine bridges form between Cys-33/Cys-77, Cys-44/Cys-64, Cys-50/Cys-71, and Cys-54/Cys-73.

Belongs to the DEFL family. As to expression, expressed in roots, siliques and seeds.

Its subcellular location is the secreted. Functionally, confers broad-spectrum resistance to pathogens. The protein is Defensin-like protein 4 (PDF2.1) of Arabidopsis thaliana (Mouse-ear cress).